The following is a 350-amino-acid chain: 3-isopropylmalate dehydrogenase (350 aa).

Position 76 to 87 (76 to 87) interacts with NAD(+); it reads GPKWDNAPKRPE. Substrate contacts are provided by R94, R104, R132, and D217. D217, D241, and D245 together coordinate Mg(2+). 275–287 is a binding site for NAD(+); the sequence is GSAPDIANQNIAN.

This sequence belongs to the isocitrate and isopropylmalate dehydrogenases family. LeuB type 1 subfamily. In terms of assembly, homodimer. Requires Mg(2+) as cofactor. Mn(2+) is required as a cofactor.

It is found in the cytoplasm. It catalyses the reaction (2R,3S)-3-isopropylmalate + NAD(+) = 4-methyl-2-oxopentanoate + CO2 + NADH. Its pathway is amino-acid biosynthesis; L-leucine biosynthesis; L-leucine from 3-methyl-2-oxobutanoate: step 3/4. Functionally, catalyzes the oxidation of 3-carboxy-2-hydroxy-4-methylpentanoate (3-isopropylmalate) to 3-carboxy-4-methyl-2-oxopentanoate. The product decarboxylates to 4-methyl-2 oxopentanoate. The chain is 3-isopropylmalate dehydrogenase from Listeria innocua serovar 6a (strain ATCC BAA-680 / CLIP 11262).